The following is a 99-amino-acid chain: Cell division protein FtsB (99 aa).

Residues 1–3 (MRV) are Cytoplasmic-facing. Residues 4-21 (FTAILLILLVLLQYRLWF) form a helical membrane-spanning segment. At 22-99 (GKNSVPDYLV…KENSTRNVNN (78 aa)) the chain is on the periplasmic side. Residues 29–53 (YLVLKENVVRQQSANEKLQQRNKLL) are a coiled coil.

This sequence belongs to the FtsB family. In terms of assembly, part of a complex composed of FtsB, FtsL and FtsQ.

The protein localises to the cell inner membrane. Its function is as follows. Essential cell division protein. May link together the upstream cell division proteins, which are predominantly cytoplasmic, with the downstream cell division proteins, which are predominantly periplasmic. The sequence is that of Cell division protein FtsB from Colwellia psychrerythraea (strain 34H / ATCC BAA-681) (Vibrio psychroerythus).